Here is a 52-residue protein sequence, read N- to C-terminus: Disintegrin multisquamatin (52 aa).

The Disintegrin domain occupies 1-50 (EGEECESGPCCRNCKFLKEGTICKRARGDDMDDYCNGKTCDCPRNPHKGP). 4 disulfide bridges follow: C5–C14, C10–C35, C11–C40, and C23–C42. Positions 27 to 29 (RGD) match the Cell attachment site motif.

Belongs to the venom metalloproteinase (M12B) family. P-II subfamily. P-IIa sub-subfamily. As to quaternary structure, monomer. Expressed by the venom gland.

The protein localises to the secreted. Its function is as follows. Inhibits ADP-induced human, canine and rabbit platelet aggregation by binding with high affinity to alpha-IIb/beta-3 (ITGA2B/ITGB3). The sequence is that of Disintegrin multisquamatin from Echis multisquamatus (Central Asian sand viper).